Here is a 248-residue protein sequence, read N- to C-terminus: Probable transcriptional regulatory protein Msil_2305 (248 aa).

Belongs to the TACO1 family.

The protein resides in the cytoplasm. The polypeptide is Probable transcriptional regulatory protein Msil_2305 (Methylocella silvestris (strain DSM 15510 / CIP 108128 / LMG 27833 / NCIMB 13906 / BL2)).